The following is a 347-amino-acid chain: Magnesium-protoporphyrin IX monomethyl ester [oxidative] cyclase (347 aa).

It belongs to the AcsF family. Fe cation is required as a cofactor.

It carries out the reaction Mg-protoporphyrin IX 13-monomethyl ester + 3 NADPH + 3 O2 + 2 H(+) = 3,8-divinyl protochlorophyllide a + 3 NADP(+) + 5 H2O. Its pathway is porphyrin-containing compound metabolism; chlorophyll biosynthesis (light-independent). In terms of biological role, catalyzes the formation of the isocyclic ring in chlorophyll biosynthesis. Mediates the cyclase reaction, which results in the formation of divinylprotochlorophyllide (Pchlide) characteristic of all chlorophylls from magnesium-protoporphyrin IX 13-monomethyl ester (MgPMME). This Prochlorococcus marinus (strain SARG / CCMP1375 / SS120) protein is Magnesium-protoporphyrin IX monomethyl ester [oxidative] cyclase.